Here is a 461-residue protein sequence, read N- to C-terminus: Proton extrusion protein PxcA (461 aa).

4 helical membrane passes run 244 to 264 (FMLL…ALIV), 339 to 359 (LKNI…VFTG), 386 to 406 (IILF…EVLV), and 421 to 441 (FINM…KYWI).

This sequence belongs to the CemA family.

It is found in the cell inner membrane. Functionally, required for H(+) efflux immediately after light irradiation to form a rapid H(+) concentration gradient across the thylakoid membranes. Together with PxcL, contributes to transient H(+) uptake following dark to light transition. The sequence is that of Proton extrusion protein PxcA from Thermosynechococcus vestitus (strain NIES-2133 / IAM M-273 / BP-1).